Consider the following 212-residue polypeptide: Probable GTP-binding protein EngB (212 aa).

The EngB-type G domain maps to 23-197 (TGIEVAFAGR…ERILDGWFGL (175 aa)). GTP is bound by residues 31–38 (GRSNAGKS), 58–62 (GRTQL), 76–79 (DLPG), 143–146 (TKAD), and 176–178 (FSS). S38 and T60 together coordinate Mg(2+).

It belongs to the TRAFAC class TrmE-Era-EngA-EngB-Septin-like GTPase superfamily. EngB GTPase family. Requires Mg(2+) as cofactor.

Necessary for normal cell division and for the maintenance of normal septation. In Alteromonas mediterranea (strain DSM 17117 / CIP 110805 / LMG 28347 / Deep ecotype), this protein is Probable GTP-binding protein EngB.